The sequence spans 242 residues: Small ribosomal subunit protein uS2 (242 aa).

Belongs to the universal ribosomal protein uS2 family.

This is Small ribosomal subunit protein uS2 from Shewanella oneidensis (strain ATCC 700550 / JCM 31522 / CIP 106686 / LMG 19005 / NCIMB 14063 / MR-1).